Consider the following 694-residue polypeptide: Soluble starch synthase 2-2, chloroplastic/amyloplastic (694 aa).

The transit peptide at 1–15 directs the protein to the chloroplast; that stretch reads MSGAIASSPAATLFL. Residues 93 to 197 form a disordered region; the sequence is KADHVEDSVS…DSENKESGPL (105 aa). Positions 127–142 are enriched in low complexity; it reads APVSKPKVDPSVPASK. Residues 156 to 176 are compositionally biased toward basic and acidic residues; that stretch reads AALDKKEDVGVAEPLEAKADA. Positions 177 to 186 are enriched in low complexity; the sequence is GGDAGAVSSA. Lysine 217 lines the ADP-alpha-D-glucose pocket.

The protein belongs to the glycosyltransferase 1 family. Bacterial/plant glycogen synthase subfamily. As to expression, expressed in leaves and weakly in endosperm and roots.

The protein localises to the plastid. Its subcellular location is the amyloplast. It localises to the chloroplast. The catalysed reaction is [(1-&gt;4)-alpha-D-glucosyl](n) + ADP-alpha-D-glucose = [(1-&gt;4)-alpha-D-glucosyl](n+1) + ADP + H(+). The protein operates within glycan biosynthesis; starch biosynthesis. Its function is as follows. May contribute to the deposition of transient starch in chloroplasts of leaves. This Oryza sativa subsp. japonica (Rice) protein is Soluble starch synthase 2-2, chloroplastic/amyloplastic (SSII-2).